Here is a 368-residue protein sequence, read N- to C-terminus: Chaperone protein DnaJ (368 aa).

The J domain occupies 5–70; the sequence is DYYQVLGVPR…KKRKLYDTHG (66 aa). The CR-type zinc finger occupies 124–201; the sequence is GVERQIQIPT…CNGAGRVEDH (78 aa). Zn(2+) contacts are provided by cysteine 137, cysteine 140, cysteine 153, cysteine 156, cysteine 175, cysteine 178, cysteine 189, and cysteine 192. CXXCXGXG motif repeat units lie at residues 137–144, 153–160, 175–182, and 189–196; these read CTHCHGSG, CGTCRGSG, CPHCGGRG, and CKVCNGAG.

The protein belongs to the DnaJ family. As to quaternary structure, homodimer. It depends on Zn(2+) as a cofactor.

The protein localises to the cytoplasm. In terms of biological role, participates actively in the response to hyperosmotic and heat shock by preventing the aggregation of stress-denatured proteins and by disaggregating proteins, also in an autonomous, DnaK-independent fashion. Unfolded proteins bind initially to DnaJ; upon interaction with the DnaJ-bound protein, DnaK hydrolyzes its bound ATP, resulting in the formation of a stable complex. GrpE releases ADP from DnaK; ATP binding to DnaK triggers the release of the substrate protein, thus completing the reaction cycle. Several rounds of ATP-dependent interactions between DnaJ, DnaK and GrpE are required for fully efficient folding. Also involved, together with DnaK and GrpE, in the DNA replication of plasmids through activation of initiation proteins. The chain is Chaperone protein DnaJ from Xylella fastidiosa (strain M23).